The primary structure comprises 75 residues: Lividin-3 (75 aa).

The signal sequence occupies residues 1 to 22; that stretch reads MFTLKKSLLLLFFLGTISLSLC. A propeptide spanning residues 23–40 is cleaved from the precursor; sequence EEERDADEDEGEMTEEEV. Residues Cys-69 and Cys-75 are joined by a disulfide bond.

Expressed by the skin glands.

It is found in the secreted. Antimicrobial peptide. This Odorrana livida (Green mountain frog) protein is Lividin-3.